We begin with the raw amino-acid sequence, 171 residues long: Vimentin-type intermediate filament-associated coiled-coil protein (171 aa).

Residues 7-98 adopt a coiled-coil conformation; that stretch reads LQIREANAHL…QRDQMIQELQ (92 aa). A disordered region spans residues 126–171; the sequence is ELGPLPSSHSHGAQLLPDGPGPPLGNSMREEEGQDDQQPAVFGTTV.

As to expression, expressed in brain, heart, kidney, liver, lung, skeletal muscle, spleen and testis. Within the kidney expression is pronounced within glomeruli.

It is found in the cytoplasm. This chain is Vimentin-type intermediate filament-associated coiled-coil protein (Vmac), found in Rattus norvegicus (Rat).